Consider the following 127-residue polypeptide: Fluoride-specific ion channel FluC (127 aa).

Transmembrane regions (helical) follow at residues 3–23 (ALLLVGAGGAAGAVARYLLGV), 36–56 (GTFAANILGGFLMGLLAGGLA), 72–92 (VGALGGFTTFSAYSLEVALMI), and 101–121 (FAYSLGSVALAVAALFAGLLL). Residues Gly76 and Thr79 each contribute to the Na(+) site.

This sequence belongs to the fluoride channel Fluc/FEX (TC 1.A.43) family.

It localises to the cell inner membrane. The catalysed reaction is fluoride(in) = fluoride(out). Na(+) is not transported, but it plays an essential structural role and its presence is essential for fluoride channel function. Functionally, fluoride-specific ion channel. Important for reducing fluoride concentration in the cell, thus reducing its toxicity. The polypeptide is Fluoride-specific ion channel FluC (Phenylobacterium zucineum (strain HLK1)).